A 504-amino-acid polypeptide reads, in one-letter code: Multicopper oxidase MmcO (504 aa).

Positions 1–44 (MPELATSGNAFDKRRFSRRGFLGAGIASGFALAACASKPTASGA) form a signal peptide, tat-type signal. Cu cation contacts are provided by histidine 120, histidine 122, histidine 161, and histidine 163. The Plastocyanin-like domain occupies 190-349 (EWIIILDDWT…NALARALLST (160 aa)). Cu cation is bound by residues histidine 437, histidine 440, histidine 442, histidine 485, cysteine 486, histidine 487, and histidine 491.

It belongs to the multicopper oxidase family. It depends on Cu cation as a cofactor. In terms of processing, predicted to be exported by the Tat system. The position of the signal peptide cleavage has not been experimentally proven.

The protein localises to the cell inner membrane. Its subcellular location is the periplasm. It carries out the reaction 4 Fe(2+) + O2 + 4 H(+) = 4 Fe(3+) + 2 H2O. Functionally, required for copper resistance. In vitro, oxidizes organic substrates and Fe(2+). May act in vivo by oxidation of toxic periplasmic Cu(+). The protein is Multicopper oxidase MmcO of Mycobacterium tuberculosis (strain ATCC 25618 / H37Rv).